A 6907-amino-acid chain; its full sequence is MELYLGACSKPAKVAVTKTVASVLAADTQQCRDGVHKTHFAGVGPAQLLDLPLGVKLPVIPGSNAVFYTTNFGEKLFRPSYGFNLTDPYCRLLENQYKSLHDPHLKAYYKRKDILKRLKKGGYITSNNKVVCTLRELNKYRQYLTSLKLDFERNYIKEQRILAKQLHNIPENNQIPQHCDVAQVQNWLLKEGTESIKDQERLMRHRYLDMISRKLEQLERTAEEQRLFLMDREERRQREHTRRKLTLRRKIEEEWKTKEMLLLTRMAEDVKREERIEEQQHRNREESDRKKQDLLEKKMAYHLQKMQDTGFNGEDIGKNTFKYRGQDGTHASPKNKKKTSEDIMLVYPAGDQNTYKETHGHTANAAHQRQNSSNNFTKKNSASVVYQADVQDNGINQKRDGMVSKNSSIFDDRGGINISGQGSIISAQVSPTRNFSRVSQAFLDPSKEEKETNADWDGRPTKRSSYLCESGPQAHATDPGIFSSPVYTNMQQNLLQNCLQEKVTSEELNIIIQNVMTWVVATVTSILYPAITKYEKRLQNNTYPVSDDSILSSDSSSFCSTCSEDFTYRSYTSATTKTFQAEPCAFVVDTSVRRPTTPIKPPPAHVEKTVVGKTCHIKGQSIISKHKYNKTNLLYSYPKLRSCKSDSHLLASFETGTKKSKDATTETDSLGSSLHCDKTAKAMDEMKNLKNVFVNFKCYLKGETEVILESILREIMSDLTQAIPSLSSVTAEVFVEQCEREKEILLSNAHIPSVASEIVENMLEKLESAVEKKCVEMFSQDLSVDIKPSLAASDELLTSSNGKPLKNSMPHTLDPMCDIAEDMVHAILEKLMTLVSFKQNEFLHLKDTNKLSCQQHKTDPICMFLQRAGKNKSSLESDEASLIVNEEVQNLISNIFSQSSLVAYIEEAINAILGYIQTELNNERIIASEETVVLLQLLEDILFQLHQEPVNESFQKSRQPRISSPSDTKEKYRLTGTRLSNSPRSGRPFPPINVPGMVLYSDDENEEIDNIVKNVLDSTFKDEKVKSQEQIPNHWFTKGNTCFECKRNIKPPTKPGSRSKAAFHDWELKTEPPSTNHEDILKKKLSSNKDISTFSQDQKHQIEKASENIVTSILKEMLKDISSVPFGHLDSKTGSEASVLVSEKPQGLSHQEWIDQMFSVSEISTVAQEITDSVLNILHKASNYISNTTKSSISSSVHQISLHNSDTEHIVKEAPNKYPLKTWFDSEKKMKYLSLFDVDPEKPPWLKSGKSEPKPVDDINDKIIRTIFKRLKSFICPKLHMGFKSSLRSQLSKYTAKIVNIVLCAIQNELELHKENLNLREIDHTKSLTDKGFFANTDKKLESLVTSIDDDILASPLLTCIYDMLLSSENAHQRSISLSSRKPKSATDSVDVQSILPNRQDKKSFHKYLATPCTHHSVNGGNHIKENAKLQVLERIGETLHEMLSKLLGTHLHSQLSCSQQSREMTNKNQKMAAALQSNIQLISKAILDYILAKLCGVDMDTSFASCGLKAISESLDIDNPSFASIIEKMAKSTKIISSIVSRRVQEDNKEETKSKAKPVAPVSSKTPSTKEMHPNKLKAVASDILNMVFAKLEGFANGHLEILGAINDGNKKSNKIGWEYESTNISRDTHEASFLSALYMHAKKVSSAILKVIQTELNVTSSDLKTSVENPPPETQILKYVVKLILDAVSSDMFNEMESEGGGIETYRYRPTYGSLPGGAESDSFLEDDAYTAKKIIDERSPQREEVKTRSLKQWALEKTLNKIEVKLKEPHISPIAPIIRNILNEIFQSTLINQLNVLSLSHSNFNGMPHNVDEPTPQTSVQFMDKMMDPLLSEADITIVTDNIVRTVFHKLYSAAMTERNVRENRYKTITFSANVSSHEHTYKGKSSVTALDENPCTFQSRFSVADKETKVNLAEDIVQAILTNLETFATSKVKSLFYSQVNFTVPVALPIQQDHSTLSKALSAKDSYSDEQFSCCSVDHTKSGKTNLCQLSLSKLNTYALQVARRNLQGIKQELDKERENPFLTHDIGISESIASQIVNALLDIISRKGKCDKNSSDKEIDLDQQKGVIEKLLNETKYRKVLQLQIQDTIEGILCDIYEKTLFQNNLSFATPTLKCSIADKHSEENSEMFMEGANKIIPKLSVPKSDVILISNDIVNIVLHNLSSAATLVINAKNPTSARLPLTFCDTFPKIDCQQPLKGSKTERKTERFSYSRNQKSAYADDNQITVVEKEDTQKSATDSCEENANFITKTIFKRLESFATERIDSLITLAFQSKEKSFVIPELENCKQNDSIFYDSSQVESDVNVLKISATETILSQELTDFTFVGRREKLGSTIHLSQARLKTYADVIASAILKLIKNDLDLEIQKIYPYQNNILFQENIIVSEIVDSMLKMLDDKRSVKEICFNSKENSNFSQLALSNEILLGHKEKERSTKQSLFTKYPLEQNQMILENKRQIIVLEEIFMRNGESKNKEKGELLIAVEELLNKLYQRVREVTGHLPPLNETANFISNSKIKTSDTTQKNSFQSHINSVANDIVESVLGKMYLVVVTSLYENNKSRTEVEISDHNDSLLMKPLRFRETKQAGKISNSPRYAISQAYSYVDSQNISVMENTLLPYLPLQVKKDLIQMVLNKITNFVSLPLKVSPKDNPKPCFKAHLKTRSKITTLPKFTKKTHLGLSAAKAKSKTKLGPGEKTLKDSRSKTAIGLSHIMSAGDAKNLLDTKLPTSELKIYAKDIIINILETIVKEFGKVKQTKALPSDQIIAAGKIVNTVLQELYVTNNCNLAYPMKSSHLRLSQGNIGTGSLPKQQACFYLENVSSQLEHIFPREGIFKKLFDKWQTESNDKENEKCKLLMIAENVLTEISIKAKELEYSLSLLNLPPLENCESRFYNHFKGASTRAEDTKAQINMFGREIVEMLLEKLQLCFLSQIPTPDSEETLSNSKEHITAKSKYGFPNKHSLSSLPIYNTKTKDQISVGSSNQIVQEIVETVLNMLESFVDLQFKHISKYEFSEIVKMPIENLSSIQQKLLNKKMLPKLQPLKMFSDKSESNTINFKENIQNILLRVHSFHSQLLTYAVNIISDMLAVIKNKLDNEISQMEPSSISILKENIVASEIIGTLMDQCTYFNESLIQNLSRESLFQGAENAYTVNQVELATNMKMFTSKLKEGSLGINPSQVSKTGFVFCSDEDMKEKYRVSSDLPTSVRSSVEDTVKNSEPTKRPDSETMPSCSTRNKVQDHRPRESNFGSFDQTMKGNSYLPEGSFLQKLLRKASDSTEAALKQVLSFIEMGKGENLRVFHYENLKPVVEPNQIQTTISPLKICLAAENIVNTVLSSCGFPSQPHTNENREIMKPFFISKQSSLSEVSGGQKDNEKSLLRMQDKKINYIPEEENENLEASREDSSFLQKLKKKEYPKIETVKEVEAFTFADHEMGSNEVHLIARHVTTSVVTYLKNFETTVFSEEKMSVSTWSRKKYESKQFLRNIYDDSSIYQCCEHLTESVLYHLTSSISDGTKKGREKEKAWEIQEATFSKIISIHSQVFESRSISIGELALCISEIIIKILFNNKIIQADIAQKMVAIPTKYTYCPGIVSGGFDDLFQDLLVGVIHVLSKEIEVDYHFESNVRNKSFSMHRNNSVPLCNKINRQASPRDWQFSTQQIGQLFQKNKLSYLACKLNSLVGNLKTSESKEVVNKVFNIVSDLFSPDECLDTGMDSGKIQRTYFYSSNNEQPNSILTNNLQLSSKSVFLLNVVCEKLIRILLEECTSTAFPDKGSVSEETSAEECQLLKMLQSVEDGKSDYRKGGMDCECLQVDYMSDLLENVAEIDQDLLTSDSMLTIISHSLVKSLMDKLSHSIQQAPESLPFANKHLNYRTREIQSSFIKARKSELIELGQSKSSLELRSYDSNSLTVSLNNPSVVSSKIQAPFNKHCAVKSSSVSPFERQRTKEMDKVAIHNKLHQEGIYAGVYSATFLEGIISELFFNLSMSLWGKNKNITVSWLNEMNTLFVNNVVNEFNNAQVTVLRNAEERLCFPPVHTETVSKIVDSVYYDVLQQYELKVACGNNPVYDNASIAEQITNGILLEILDYKLPSCFKEHLIPHSYYPLKPEIILQKLQSNLTEFTSLPRSSSDYSTMLSHSFLEDVIRRLLSQLIPPPITCSSLGKKYLMSSDFNEMSTCIINKVMSAISKHKIWFTIYDNQYLYTGKNLQKMVDSVYCNILQMSDSLVSIQKSIVSRSPIMIDQIASFIIQEIIENHLQPFLSGEVLCHPRTPLDPVSTIVTQVLSEVIESHRPQKQSPLDIHLDSFVREIVARLLSKIFSPKHNTEIELKNMTQRIVNSINRHFNKAKIHILYDDKEQAFFSFNTDIVDELATSVYRNALKQHGLDLAVDKESEDSGIFVENITNLIVAAISDYLLHPLFSGDFSASTYSNSVAENIVQDILSNISKSTEPSQSVPLYNTLLPYTFLEDMIRVLLSKLFSSASSLVLNRDTQKDISRVNFNDIASNLVSDIRMKVSQHEIRFSKEEEETKFIYSEDDIQHLVDSVFANVVQTSGSQESAVQNITSSNDILIDRIAGFIIKHICQKHLQPFVSGKSLSSSDTYFDDERRQLFYTSVYSSTFLEDVISGVLRKIFHRVVGIVQTKSIRDSEDELFEKAEELIHLITGEFSKAQVSIIDNTEERLCLPPVERDVVKTIVDMVYSKVLQEYEMEVVPNKDFLNDTKTLAARITNIILAEIFDFQIHPDLIANLPFKSHSKLSANVLIQRVQYDISKSRFQRQASTMYTTMLSHSHLEKIVTQLTSQISPLNTSAEQSDTTKSDLSNTVIKLINEIMSIISKHEICIIKYGNKKQSMISAKDIQSMVDSIYADLSHSNIYQSITKDKKSISDIPVSKIASFIIKEIFNHHIQSFLSEDKTLLLAAVDQTYKLKAIDPKQRELSFIVNSSVFLEEVISELLCKILYAFSHNMLVTENPDRVKLKLTRIVTTLVNSIVLEFTTSEILVADNFDKNLCFSERYKEMVQKIVNSVYGKVLDQYKSLIQIHRVIQSDTICFGRKIYYLLLEEIYDYQVQSLVSGELESSSYSYPQADNIIRNVLNIITKDSHALPPYITVLPHSLLEDMVYRLLGHVFPSTHTENELKEKKFPPDDEFVEAASKLTDEIIKEISEHEIRLSMAEDNAESMQLEPIENLVDSICNNILKTSEFQAEVQKDADKKGCSFLSKLAGFIMKEIMYHHLQPFLHGEESSFSDLSDYDHVSELAKSGKEKTQPSLYSATFLEDIIIDLVHKFCSLLIITEDSKKNEMAELDIMGLALKLANSLIREFKKSDIKVLPNAEKMFSFPPIDKETVDKISNFVYEQFIEKCTSHDIQKGDESNIAIGMIAALTQKAISAFRIQPLFSGDWSSTFFSFLNPDNITQRVQHLPQNTFTQISRCAKENQLSLPDQSYKDTSSTPDCKNMMSTLEINRGTMNRKKSFKTKDTSVKKGDIQNPVLSSINAIMKSGMINLTSGLATGVTNKKEVDENKVGICTQKHSENVSKVTSTTTVKSKDTQEPNLSETFNNNEIEKKRNLIPTDKKGKDDEIYTHFSLIIDDTEYEKEVLGSDSEIGYKKKIDNARESSFKKDDKLFQLSSLKSKRNLGTTTDTLEIRIRTSSNEGRRDSPTQTCRDEEHHSDYEHVQNVIENIFEDVLELSSSPEPAYYSKLSYDQSPPGDNVLNVIQEISRDSAQSVTTKKVSSSTNKNISAKEKEEEEREKEKVREEIKSEPSKPDDPQNQRESKPGIFPAKFLEDVITEMVKQLIFSSIPETQIQDRCQNVSDKQNQAKLYDTAMKLINSLLKEFSDAQIKVFRPDKGNQFPGGKVSSVPKVPPRYKEPTTDEAPSSIKIKSADKMPPMHKMMRKPSSDKIPSIDKTLVNKVVHSSVCNILNDYGSQDSIWKNINSNGENLARRLTSAVINEIFQRQVNLIFCDEVSVSACLPLESKDVVKKVQKLAQTASKECQTSSPYTIILPHKFLENVISALFSKIFSTISSTKTKEPEDNLSTELNFLQMKLVSAVATEISQDKYMTIQYVETLQSDDDEIIQLVVQSVYNNLLPQFGSQEIIQNCVTSGCKILSENIVDLVLREVASNQLQSYFCGELTPHQCVEVENIVEKILKDVFQTTDVPLPKPSHADKLSYNIIEEIAVKFLSKLLSIFPKVHKERTKSLETDMQKITSKVLNSVQEFISKSKIKLVPPTKESPTVPVADNATIENIVNSIYTSVLKHSGSYTSVFKDLMGKSNVLSDTIGFLMVNAISNSEFQPQVEEEVSNSELVLEAVKIMEKVIKIIDELKSKEKSSSRKGLTLDAKLLEEVLALFLAKLIRLPSSSSKDEKNLSKTELNKIASQLSKLVTAEISRSSISLIASDPEEHCLNPENTERIYQVVDSVYSNILQQSGTNKEFYYDIKDTNTAFPKKVASLIIDGVSSFPLDTINSTISNADLSGELDVNRIVQKAQEHAFNVIPELEQEKLDQNLSEEESPIKIVPHVGKKPVKIDPKIISEHLAVISIKTQPLEKLKQECLKRTGHSIAELRRASISGRNYSLGSPDLEKRKTERRTSLDKTGRLDVKPLEAVARNSFQNIRKPDITKVELLKDVQSKNDLIVRLVAHDIDQVYLENYIKEERDSDEDEVVLTQTFAKEEGIKVFEDQVKEVKKPIQSKLSPKSTLSTSSLKKFLSLSKCCQTTASANIESTEAISNQVIESKETHVKRAVAELDMATPKTMPETASSSWEEKPQCKKEEKNLVTEPTHYFIHRIMSSSSYNQEDLISSTGEAEDCHSDPSAKILEESSQEQKPEHGNSVKFITIFERSKDVLGSANPSKEVISETPKPDVSKQGSKMLTKMSSTLSKVFSQCNTNISRSSSPAHQDEH.

The tract at residues 273–292 (EERIEEQQHRNREESDRKKQ) is disordered. Ser-430 is modified (phosphoserine). 8 disordered regions span residues 439 to 472 (SQAFLDPSKEEKETNADWDGRPTKRSSYLCESGP), 954 to 990 (FQKSRQPRISSPSDTKEKYRLTGTRLSNSPRSGRPFP), 1545 to 1573 (VQEDNKEETKSKAKPVAPVSSKTPSTKEM), 3202 to 3257 (VSSD…FDQT), 5650 to 5672 (RTSSNEGRRDSPTQTCRDEEHHS), 5725 to 5781 (SAQS…KPGI), 5850 to 5880 (DKGNQFPGGKVSSVPKVPPRYKEPTTDEAPS), and 6852 to 6874 (GSANPSKEVISETPKPDVSKQGS). The segment covering 445–460 (PSKEEKETNADWDGRP) has biased composition (basic and acidic residues). Residues 954–966 (FQKSRQPRISSPS) show a composition bias toward polar residues. Composition is skewed to basic and acidic residues over residues 1545-1555 (VQEDNKEETKS) and 3213-3229 (SVEDTVKNSEPTKRPDS). Residues 5728–5741 (SVTTKKVSSSTNKN) are compositionally biased toward low complexity. A coiled-coil region spans residues 5738 to 5766 (TNKNISAKEKEEEEREKEKVREEIKSEPS). Basic and acidic residues predominate over residues 5743 to 5778 (SAKEKEEEEREKEKVREEIKSEPSKPDDPQNQRESK).

As to quaternary structure, may interact with AKAP4. Predominantly expressed in testis.

In terms of biological role, plays a role in spermatogenesis. The protein is Fibrous sheath-interacting protein 2 (FSIP2) of Homo sapiens (Human).